Here is a 142-residue protein sequence, read N- to C-terminus: Large ribosomal subunit protein bL19 (142 aa).

This sequence belongs to the bacterial ribosomal protein bL19 family.

Its function is as follows. This protein is located at the 30S-50S ribosomal subunit interface and may play a role in the structure and function of the aminoacyl-tRNA binding site. This Psychrobacter cryohalolentis (strain ATCC BAA-1226 / DSM 17306 / VKM B-2378 / K5) protein is Large ribosomal subunit protein bL19.